The chain runs to 88 residues: Beta-defensin 115 (88 aa).

An N-terminal signal peptide occupies residues 1–27 (MLPDHFSPLSGDIKLSVLALVVLVVLA). Intrachain disulfides connect C38–C65, C45–C59, and C49–C66.

It belongs to the beta-defensin family.

Its subcellular location is the secreted. Its function is as follows. Has antibacterial activity. The protein is Beta-defensin 115 (DEFB115) of Homo sapiens (Human).